A 123-amino-acid chain; its full sequence is Large ribosomal subunit protein bL12 (123 aa).

Belongs to the bacterial ribosomal protein bL12 family. As to quaternary structure, homodimer. Part of the ribosomal stalk of the 50S ribosomal subunit. Forms a multimeric L10(L12)X complex, where L10 forms an elongated spine to which 2 to 4 L12 dimers bind in a sequential fashion. Binds GTP-bound translation factors.

Its function is as follows. Forms part of the ribosomal stalk which helps the ribosome interact with GTP-bound translation factors. Is thus essential for accurate translation. The sequence is that of Large ribosomal subunit protein bL12 from Photorhabdus laumondii subsp. laumondii (strain DSM 15139 / CIP 105565 / TT01) (Photorhabdus luminescens subsp. laumondii).